A 126-amino-acid polypeptide reads, in one-letter code: Small ribosomal subunit protein uS12 (126 aa).

Residues 1–28 (MPTIQQLIRSERSKVQKKTKSPALKQCP) form a disordered region. Residue D89 is modified to 3-methylthioaspartic acid. Residues 104 to 126 (ATGVKDRKQGRSKYGTKREKAKK) form a disordered region. Over residues 113 to 126 (GRSKYGTKREKAKK) the composition is skewed to basic residues.

It belongs to the universal ribosomal protein uS12 family. Part of the 30S ribosomal subunit. Contacts proteins S8 and S17. May interact with IF1 in the 30S initiation complex.

With S4 and S5 plays an important role in translational accuracy. In terms of biological role, interacts with and stabilizes bases of the 16S rRNA that are involved in tRNA selection in the A site and with the mRNA backbone. Located at the interface of the 30S and 50S subunits, it traverses the body of the 30S subunit contacting proteins on the other side and probably holding the rRNA structure together. The combined cluster of proteins S8, S12 and S17 appears to hold together the shoulder and platform of the 30S subunit. In Synechocystis sp. (strain ATCC 27184 / PCC 6803 / Kazusa), this protein is Small ribosomal subunit protein uS12.